An 888-amino-acid chain; its full sequence is Isoleucine--tRNA ligase (888 aa).

The 'HIGH' region signature appears at 61–71; that stretch reads PYANGSIHIGH. Position 551 (glutamate 551) interacts with L-isoleucyl-5'-AMP. The short motif at 592–596 is the 'KMSKS' region element; that stretch reads KMSKQ. Residue lysine 595 participates in ATP binding. Zn(2+) is bound by residues cysteine 862, cysteine 865, cysteine 879, and cysteine 882.

This sequence belongs to the class-I aminoacyl-tRNA synthetase family. IleS type 1 subfamily. As to quaternary structure, monomer. Requires Zn(2+) as cofactor.

The protein localises to the cytoplasm. The enzyme catalyses tRNA(Ile) + L-isoleucine + ATP = L-isoleucyl-tRNA(Ile) + AMP + diphosphate. Catalyzes the attachment of isoleucine to tRNA(Ile). As IleRS can inadvertently accommodate and process structurally similar amino acids such as valine, to avoid such errors it has two additional distinct tRNA(Ile)-dependent editing activities. One activity is designated as 'pretransfer' editing and involves the hydrolysis of activated Val-AMP. The other activity is designated 'posttransfer' editing and involves deacylation of mischarged Val-tRNA(Ile). The polypeptide is Isoleucine--tRNA ligase (Mycoplasmopsis pulmonis (strain UAB CTIP) (Mycoplasma pulmonis)).